The following is a 281-amino-acid chain: 2-C-methyl-D-erythritol 4-phosphate cytidylyltransferase (281 aa).

It belongs to the IspD/TarI cytidylyltransferase family. IspD subfamily.

It catalyses the reaction 2-C-methyl-D-erythritol 4-phosphate + CTP + H(+) = 4-CDP-2-C-methyl-D-erythritol + diphosphate. The protein operates within isoprenoid biosynthesis; isopentenyl diphosphate biosynthesis via DXP pathway; isopentenyl diphosphate from 1-deoxy-D-xylulose 5-phosphate: step 2/6. In terms of biological role, catalyzes the formation of 4-diphosphocytidyl-2-C-methyl-D-erythritol from CTP and 2-C-methyl-D-erythritol 4-phosphate (MEP). This Psychrobacter arcticus (strain DSM 17307 / VKM B-2377 / 273-4) protein is 2-C-methyl-D-erythritol 4-phosphate cytidylyltransferase.